The following is a 256-amino-acid chain: Small ribosomal subunit protein eS1A (256 aa).

N-acetylalanine; partial is present on Ala2.

The protein belongs to the eukaryotic ribosomal protein eS1 family. In terms of assembly, component of the small ribosomal subunit. Mature ribosomes consist of a small (40S) and a large (60S) subunit. The 40S subunit contains about 33 different proteins and 1 molecule of RNA (18S). The 60S subunit contains about 49 different proteins and 3 molecules of RNA (25S, 5.8S and 5S).

It localises to the cytoplasm. The sequence is that of Small ribosomal subunit protein eS1A from Clavispora lusitaniae (strain ATCC 42720) (Yeast).